The sequence spans 513 residues: Cytochrome P450 1A2 (513 aa).

The O-linked (GlcNAc) serine glycan is linked to Ser-68. Residue Phe-225 participates in substrate binding. Cys-456 contacts heme.

It belongs to the cytochrome P450 family. As to quaternary structure, interacts with PGRMC1; the interaction requires PGRMC1 homodimerization. It depends on heme as a cofactor. Found in lung and liver.

It is found in the endoplasmic reticulum membrane. The protein resides in the microsome membrane. It carries out the reaction an organic molecule + reduced [NADPH--hemoprotein reductase] + O2 = an alcohol + oxidized [NADPH--hemoprotein reductase] + H2O + H(+). It catalyses the reaction 17beta-estradiol + reduced [NADPH--hemoprotein reductase] + O2 = 2-hydroxy-17beta-estradiol + oxidized [NADPH--hemoprotein reductase] + H2O + H(+). The catalysed reaction is 17beta-estradiol + reduced [NADPH--hemoprotein reductase] + O2 = 4-hydroxy-17beta-estradiol + oxidized [NADPH--hemoprotein reductase] + H2O + H(+). The enzyme catalyses estrone + reduced [NADPH--hemoprotein reductase] + O2 = 2-hydroxyestrone + oxidized [NADPH--hemoprotein reductase] + H2O + H(+). It carries out the reaction estrone + reduced [NADPH--hemoprotein reductase] + O2 = 4-hydroxyestrone + oxidized [NADPH--hemoprotein reductase] + H2O + H(+). It catalyses the reaction cholesterol + reduced [NADPH--hemoprotein reductase] + O2 = 25-hydroxycholesterol + oxidized [NADPH--hemoprotein reductase] + H2O + H(+). The catalysed reaction is all-trans-retinol + reduced [NADPH--hemoprotein reductase] + O2 = all-trans-retinal + oxidized [NADPH--hemoprotein reductase] + 2 H2O + H(+). The enzyme catalyses all-trans-retinal + reduced [NADPH--hemoprotein reductase] + O2 = all-trans-retinoate + oxidized [NADPH--hemoprotein reductase] + H2O + 2 H(+). It carries out the reaction (5Z,8Z,11Z,14Z)-eicosatetraenoate + reduced [NADPH--hemoprotein reductase] + O2 = (14R,15S)-epoxy-(5Z,8Z,11Z)-eicosatrienoate + oxidized [NADPH--hemoprotein reductase] + H2O + H(+). It catalyses the reaction (5Z,8Z,11Z,14Z)-eicosatetraenoate + reduced [NADPH--hemoprotein reductase] + O2 = (14S,15R)-epoxy-(5Z,8Z,11Z)-eicosatrienoate + oxidized [NADPH--hemoprotein reductase] + H2O + H(+). The catalysed reaction is (5Z,8Z,11Z,14Z,17Z)-eicosapentaenoate + reduced [NADPH--hemoprotein reductase] + O2 = (17R,18S)-epoxy-(5Z,8Z,11Z,14Z)-eicosatetraenoate + oxidized [NADPH--hemoprotein reductase] + H2O + H(+). The enzyme catalyses (4Z,7Z,10Z,13Z,16Z,19Z)-docosahexaenoate + reduced [NADPH--hemoprotein reductase] + O2 = (19R,20S)-epoxy-(4Z,7Z,10Z,13Z,16Z)-docosapentaenoate + oxidized [NADPH--hemoprotein reductase] + H2O + H(+). It carries out the reaction (5S)-hydroperoxy-(6E,8Z,11Z,14Z)-eicosatetraenoate = 5-oxo-(6E,8Z,11Z,14Z)-eicosatetraenoate + H2O. It catalyses the reaction (12S)-hydroperoxy-(5Z,8Z,10E,14Z)-eicosatetraenoate = 12-oxo-(5Z,8Z,10E,14Z)-eicosatetraenoate + H2O. The catalysed reaction is (15S)-hydroperoxy-(5Z,8Z,11Z,13E)-eicosatetraenoate = 15-oxo-(5Z,8Z,11Z,13E)-eicosatetraenoate + H2O. The enzyme catalyses (13S)-hydroperoxy-(9Z,11E)-octadecadienoate = 13-oxo-(9Z,11E)-octadecadienoate + H2O. It carries out the reaction (5Z,8Z,11Z,14Z)-eicosatetraenoate + reduced [NADPH--hemoprotein reductase] + O2 = 13-hydroxy-(5Z,8Z,11Z,14Z)-eicosatetraenoate + oxidized [NADPH--hemoprotein reductase] + H2O + H(+). It catalyses the reaction (5Z,8Z,11Z,14Z)-eicosatetraenoate + reduced [NADPH--hemoprotein reductase] + O2 = 19-hydroxy-(5Z,8Z,11Z,14Z)-eicosatetraenoate + oxidized [NADPH--hemoprotein reductase] + H2O + H(+). The catalysed reaction is (9Z,12Z)-octadecadienoate + reduced [NADPH--hemoprotein reductase] + O2 = 11-hydroxy-(9Z,12Z)-octadecadienoate + oxidized [NADPH--hemoprotein reductase] + H2O + H(+). It functions in the pathway cofactor metabolism; retinol metabolism. It participates in steroid metabolism; cholesterol metabolism. Its pathway is lipid metabolism; arachidonate metabolism. A cytochrome P450 monooxygenase involved in the metabolism of various endogenous substrates, including fatty acids, steroid hormones and vitamins. Mechanistically, uses molecular oxygen inserting one oxygen atom into a substrate, and reducing the second into a water molecule, with two electrons provided by NADPH via cytochrome P450 reductase (NADPH--hemoprotein reductase). Catalyzes the hydroxylation of carbon-hydrogen bonds. Exhibits high catalytic activity for the formation of hydroxyestrogens from estrone (E1) and 17beta-estradiol (E2), namely 2-hydroxy E1 and E2. Metabolizes cholesterol toward 25-hydroxycholesterol, a physiological regulator of cellular cholesterol homeostasis. May act as a major enzyme for all-trans retinoic acid biosynthesis in the liver. Catalyzes two successive oxidative transformation of all-trans retinol to all-trans retinal and then to the active form all-trans retinoic acid. Primarily catalyzes stereoselective epoxidation of the last double bond of polyunsaturated fatty acids (PUFA), displaying a strong preference for the (R,S) stereoisomer. Catalyzes bisallylic hydroxylation and omega-1 hydroxylation of PUFA. May also participate in eicosanoids metabolism by converting hydroperoxide species into oxo metabolites (lipoxygenase-like reaction, NADPH-independent). Plays a role in the oxidative metabolism of xenobiotics. Catalyzes the N-hydroxylation of heterocyclic amines and the O-deethylation of phenacetin. Metabolizes caffeine via N3-demethylation. This is Cytochrome P450 1A2 (CYP1A2) from Mesocricetus auratus (Golden hamster).